A 409-amino-acid chain; its full sequence is Phosphoglycerate kinase (409 aa).

Residues 23-25 (DIN), 63-66 (HQSR), Arg120, and Arg160 each bind substrate. ATP is bound by residues Glu333 and 359 to 362 (GGHL).

Belongs to the phosphoglycerate kinase family. As to quaternary structure, monomer.

It is found in the cytoplasm. It catalyses the reaction (2R)-3-phosphoglycerate + ATP = (2R)-3-phospho-glyceroyl phosphate + ADP. Its pathway is carbohydrate degradation; glycolysis; pyruvate from D-glyceraldehyde 3-phosphate: step 2/5. The sequence is that of Phosphoglycerate kinase (pgk) from Methanobacterium bryantii.